Here is a 386-residue protein sequence, read N- to C-terminus: Adiponectin receptor protein 2 (386 aa).

Residues 1–71 are disordered; sequence MNEPTENRLG…HEYSDEAPQE (71 aa). The Cytoplasmic portion of the chain corresponds to 1–147; it reads MNEPTENRLG…SIFRIHTETG (147 aa). Residues 15-41 show a composition bias toward basic and acidic residues; the sequence is PEPDIRLRKGHQLDGTRRGDNDSHQGD. Residues 148–168 traverse the membrane as a helical segment; sequence NIWTHLLGCVFFLCLGIFYMF. Residues 169–181 are Extracellular-facing; the sequence is RPNISFVAPLQEK. Residues 182–202 traverse the membrane as a helical segment; sequence VVFGLFFLGAILCLSFSWLFH. Position 202 (His-202) interacts with Zn(2+). The Cytoplasmic portion of the chain corresponds to 203–213; the sequence is TVYCHSEGVSR. The chain crosses the membrane as a helical span at residues 214–234; the sequence is LFSKLDYSGIALLIMGSFVPW. Topologically, residues 235-245 are extracellular; it reads LYYSFYCNPQP. The chain crosses the membrane as a helical span at residues 246–266; that stretch reads CFIYLIVICVLGIAAIIVSQW. At 267–273 the chain is on the cytoplasmic side; sequence DMFATPQ. A helical membrane pass occupies residues 274–294; it reads YRGVRAGVFLGLGLSGIIPTL. Residues 295–309 lie on the Extracellular side of the membrane; that stretch reads HYVISEGFLKAATIG. A helical transmembrane segment spans residues 310–330; sequence QIGWLMLMASLYITGAALYAA. Residues 331-348 are Cytoplasmic-facing; sequence RIPERFFPGKCDIWFHSH. His-348 and His-352 together coordinate Zn(2+). Residues 349–369 traverse the membrane as a helical segment; that stretch reads QLFHIFVVAGAFVHFHGVSNL. Residues 370-386 are Extracellular-facing; sequence QEFRFMIGGGCSEEDAL.

Belongs to the ADIPOR family. In terms of assembly, may form homooligomers and heterooligomers with ADIPOR1. Interacts with APPL2 (via BAR domain); ADIPOQ dissociates this interaction. In terms of tissue distribution, ubiquitous. Highly expressed in skeletal muscle, liver and placenta. Weakly expressed in brain, heart, colon, spleen, kidney, thymus, small intestine, peripheral blood leukocytes and lung.

The protein localises to the cell membrane. Receptor for ADIPOQ, an essential hormone secreted by adipocytes that regulates glucose and lipid metabolism. Required for normal body fat and glucose homeostasis. ADIPOQ-binding activates a signaling cascade that leads to increased PPARA activity, and ultimately to increased fatty acid oxidation and glucose uptake. Has intermediate affinity for globular and full-length adiponectin. Required for normal revascularization after chronic ischemia caused by severing of blood vessels. This is Adiponectin receptor protein 2 from Homo sapiens (Human).